Here is a 430-residue protein sequence, read N- to C-terminus: Adenylosuccinate synthetase (430 aa).

GTP contacts are provided by residues 12 to 18 (GDEGKGK) and 40 to 42 (GHT). Aspartate 13 acts as the Proton acceptor in catalysis. Positions 13 and 40 each coordinate Mg(2+). Residues 13 to 16 (DEGK), 38 to 41 (NAGH), threonine 129, arginine 143, glutamine 223, threonine 238, and arginine 302 contribute to the IMP site. Histidine 41 (proton donor) is an active-site residue. 298 to 304 (TTTGRPR) contributes to the substrate binding site. GTP is bound by residues arginine 304, 330-332 (KLD), and 412-414 (SVG).

It belongs to the adenylosuccinate synthetase family. Homodimer. The cofactor is Mg(2+).

The protein resides in the cytoplasm. The catalysed reaction is IMP + L-aspartate + GTP = N(6)-(1,2-dicarboxyethyl)-AMP + GDP + phosphate + 2 H(+). Its pathway is purine metabolism; AMP biosynthesis via de novo pathway; AMP from IMP: step 1/2. Plays an important role in the de novo pathway of purine nucleotide biosynthesis. Catalyzes the first committed step in the biosynthesis of AMP from IMP. This Desulforudis audaxviator (strain MP104C) protein is Adenylosuccinate synthetase.